A 225-amino-acid polypeptide reads, in one-letter code: tRNA (guanine-N(1)-)-methyltransferase (225 aa).

S-adenosyl-L-methionine-binding positions include G112 and 132 to 137 (IGDYVL).

It belongs to the RNA methyltransferase TrmD family. As to quaternary structure, homodimer.

Its subcellular location is the cytoplasm. The enzyme catalyses guanosine(37) in tRNA + S-adenosyl-L-methionine = N(1)-methylguanosine(37) in tRNA + S-adenosyl-L-homocysteine + H(+). Specifically methylates guanosine-37 in various tRNAs. The polypeptide is tRNA (guanine-N(1)-)-methyltransferase (Flavobacterium psychrophilum (strain ATCC 49511 / DSM 21280 / CIP 103535 / JIP02/86)).